The following is a 744-amino-acid chain: Photosystem I P700 chlorophyll a apoprotein A2 (744 aa).

8 consecutive transmembrane segments (helical) span residues 48-71, 137-160, 177-201, 275-293, 337-360, 376-402, 424-446, and 527-545; these read LFAT…FHIA, LYAG…LHLQ, LNHH…HVAI, MAHH…GHMY, LHFQ…QHMY, AALY…IFLV, AIIS…LYVH, and FLVH…LILV. Positions 569 and 578 each coordinate [4Fe-4S] cluster. 2 helical membrane passes run 585 to 606 and 653 to 675; these read AFYL…YWHW and LAVW…MFLI. Residues His-664, Met-672, and Tyr-680 each contribute to the chlorophyll a site. Residue Trp-681 coordinates phylloquinone. The helical transmembrane segment at 717–737 threads the bilayer; sequence LVGLAHFTVGYVLTYAAFVIA.

It belongs to the PsaA/PsaB family. In terms of assembly, the PsaA/B heterodimer binds the P700 chlorophyll special pair and subsequent electron acceptors. PSI consists of a core antenna complex that captures photons, and an electron transfer chain that converts photonic excitation into a charge separation. The cyanobacterial PSI reaction center is composed of one copy each of PsaA,B,C,D,E,F,I,J,K,L,M and X, and forms trimeric complexes. PSI electron transfer chain: 5 chlorophyll a, 1 chlorophyll a', 2 phylloquinones and 3 4Fe-4S clusters. PSI core antenna: 90 chlorophyll a, 22 carotenoids, 3 phospholipids and 1 galactolipid. P700 is a chlorophyll a/chlorophyll a' dimer, A0 is one or more chlorophyll a, A1 is one or both phylloquinones and FX is a shared 4Fe-4S iron-sulfur center. is required as a cofactor.

Its subcellular location is the cellular thylakoid membrane. The enzyme catalyses reduced [plastocyanin] + hnu + oxidized [2Fe-2S]-[ferredoxin] = oxidized [plastocyanin] + reduced [2Fe-2S]-[ferredoxin]. PsaA and PsaB bind P700, the primary electron donor of photosystem I (PSI), as well as the electron acceptors A0, A1 and FX. PSI is a plastocyanin/cytochrome c6-ferredoxin oxidoreductase, converting photonic excitation into a charge separation, which transfers an electron from the donor P700 chlorophyll pair to the spectroscopically characterized acceptors A0, A1, FX, FA and FB in turn. Oxidized P700 is reduced on the lumenal side of the thylakoid membrane by plastocyanin or cytochrome c6. This Synechococcus sp. (strain JA-2-3B'a(2-13)) (Cyanobacteria bacterium Yellowstone B-Prime) protein is Photosystem I P700 chlorophyll a apoprotein A2.